Consider the following 144-residue polypeptide: Globin (144 aa).

At Ala1 the chain carries N-acetylalanine. In terms of domain architecture, Globin spans 1-144; that stretch reads ALSAADAGLL…IISALQSAGK (144 aa). His95 lines the heme b pocket.

Belongs to the globin family. In terms of assembly, monomer.

This is Globin from Aplysia juliana (Walking sea hare).